The primary structure comprises 574 residues: Peptidyl-prolyl cis-trans isomerase FKBP9 (574 aa).

Residues 1-26 (MAIRARSWRPPPPPLLLLLLWVTGQA) form the signal peptide. PPIase FKBP-type domains follow at residues 58 to 146 (GDFV…MDIW), 170 to 258 (SDFV…LDLH), 282 to 369 (GDFL…IDFH), and 393 to 481 (GDYL…LELV). Residues Asn178, Asn290, Asn306, and Asn401 are each glycosylated (N-linked (GlcNAc...) asparagine). 2 EF-hand domains span residues 492-527 (WNGEVSANLFEEIDKDGDGEVLLEEFSEYIHAQVAS) and 537-572 (DAEMIVKNMFTNQDRNGDGKVTAEEFKLKDQETKHD). Ca(2+)-binding residues include Asp505, Asp507, Asp509, Glu511, Glu516, Asp550, Asn552, Asp554, Lys556, and Glu561. The Prevents secretion from ER motif lies at 571-574 (HDEL).

In terms of processing, phosphorylated.

It localises to the endoplasmic reticulum. It catalyses the reaction [protein]-peptidylproline (omega=180) = [protein]-peptidylproline (omega=0). Its activity is regulated as follows. Inhibited by FK506. In terms of biological role, PPIases accelerate the folding of proteins during protein synthesis. This chain is Peptidyl-prolyl cis-trans isomerase FKBP9 (FKBP9), found in Bos taurus (Bovine).